We begin with the raw amino-acid sequence, 400 residues long: Enoyl-[acyl-carrier-protein] reductase [NADH] 1 (400 aa).

Residues 48-53 (GASSGY), 74-75 (FE), 111-112 (DA), and 139-140 (LA) contribute to the NAD(+) site. Residue tyrosine 225 coordinates substrate. The active-site Proton donor is the tyrosine 235. NAD(+) is bound by residues lysine 244 and 273–275 (VVT).

The protein belongs to the TER reductase family. Monomer.

The catalysed reaction is a 2,3-saturated acyl-[ACP] + NAD(+) = a (2E)-enoyl-[ACP] + NADH + H(+). It participates in lipid metabolism; fatty acid biosynthesis. Involved in the final reduction of the elongation cycle of fatty acid synthesis (FAS II). Catalyzes the reduction of a carbon-carbon double bond in an enoyl moiety that is covalently linked to an acyl carrier protein (ACP). In Vibrio vulnificus (strain YJ016), this protein is Enoyl-[acyl-carrier-protein] reductase [NADH] 1.